We begin with the raw amino-acid sequence, 246 residues long: Protein YIPF4 (246 aa).

Over 1–115 the chain is Cytoplasmic; sequence MQPPGPPPAY…FNRQVVRDNP (115 aa). Residues 116 to 136 form a helical membrane-spanning segment; sequence DFWGPLAVVLFFSMISLYGQF. At 137–140 the chain is on the lumenal side; it reads RVVS. Residues 141 to 161 form a helical membrane-spanning segment; the sequence is WIITIWIFGSLTIFLLARVLG. Residues 162–168 lie on the Cytoplasmic side of the membrane; that stretch reads GEVAYGQ. Residues 169–189 traverse the membrane as a helical segment; the sequence is VLGVIGYSLLPLIVIAPILLV. Over 190 to 197 the chain is Lumenal; it reads VGSFEMVS. A helical membrane pass occupies residues 198–218; sequence TLIKLFGVFWAAYSAASLLVG. At 219-225 the chain is on the cytoplasmic side; sequence EEFKTKK. A helical transmembrane segment spans residues 226-246; that stretch reads PLLIYPIFLLYIYFLSLYTGV.

Belongs to the YIP1 family. In terms of assembly, interacts with YIPF3 and YIPF5.

It is found in the golgi apparatus. The protein resides in the cis-Golgi network membrane. Functionally, involved in the maintenance of the Golgi structure. In Mus musculus (Mouse), this protein is Protein YIPF4 (Yipf4).